The primary structure comprises 227 residues: Ribosomal RNA large subunit methyltransferase E (227 aa).

S-adenosyl-L-methionine contacts are provided by G78, W80, D103, D119, and D143. The active-site Proton acceptor is the K183.

Belongs to the class I-like SAM-binding methyltransferase superfamily. RNA methyltransferase RlmE family.

The protein localises to the cytoplasm. The catalysed reaction is uridine(2552) in 23S rRNA + S-adenosyl-L-methionine = 2'-O-methyluridine(2552) in 23S rRNA + S-adenosyl-L-homocysteine + H(+). Functionally, specifically methylates the uridine in position 2552 of 23S rRNA at the 2'-O position of the ribose in the fully assembled 50S ribosomal subunit. The protein is Ribosomal RNA large subunit methyltransferase E of Rickettsia typhi (strain ATCC VR-144 / Wilmington).